The chain runs to 135 residues: MALYEHMFLARQDIAPQQVDELLNIYKGVIETYGGKVGRVENWGLRPLAYRIRKNRKAYYVLVNIDAPATAIAEVERQMRINEDILRYMTIRVEKHEKEKSAMFSRLDRNGHIGHDEKHPRSPSRQREDVIEGVE.

Residues 104-135 form a disordered region; that stretch reads FSRLDRNGHIGHDEKHPRSPSRQREDVIEGVE.

This sequence belongs to the bacterial ribosomal protein bS6 family.

Functionally, binds together with bS18 to 16S ribosomal RNA. This chain is Small ribosomal subunit protein bS6, found in Bartonella henselae (strain ATCC 49882 / DSM 28221 / CCUG 30454 / Houston 1) (Rochalimaea henselae).